The following is a 129-amino-acid chain: Follitropin subunit beta (129 aa).

An N-terminal signal peptide occupies residues 1 to 18 (MKTVQFCFLFCCWKAICC). Intrachain disulfides connect Cys-21–Cys-69, Cys-35–Cys-84, Cys-38–Cys-122, Cys-46–Cys-100, Cys-50–Cys-102, and Cys-105–Cys-112. N-linked (GlcNAc...) asparagine glycans are attached at residues Asn-25 and Asn-42.

The protein belongs to the glycoprotein hormones subunit beta family. In terms of assembly, heterodimer. The active follitropin is a heterodimer composed of an alpha chain/CGA shared with other hormones and a unique beta chain/FSHB shown here.

It localises to the secreted. In terms of biological role, together with the alpha chain CGA constitutes follitropin, the follicle-stimulating hormone, and provides its biological specificity to the hormone heterodimer. Binds FSHR, a G protein-coupled receptor, on target cells to activate downstream signaling pathways. Follitropin is involved in follicle development and spermatogenesis in reproductive organs. The sequence is that of Follitropin subunit beta (FSHB) from Macaca fascicularis (Crab-eating macaque).